The following is a 20-amino-acid chain: Cytochrome P450IIB (20 aa).

It belongs to the cytochrome P450 family. Heme is required as a cofactor.

The protein resides in the endoplasmic reticulum membrane. The protein localises to the microsome membrane. The catalysed reaction is an organic molecule + reduced [NADPH--hemoprotein reductase] + O2 = an alcohol + oxidized [NADPH--hemoprotein reductase] + H2O + H(+). Its function is as follows. Cytochromes P450 are a group of heme-thiolate monooxygenases. In liver microsomes, this enzyme is involved in an NADPH-dependent electron transport pathway. This isozyme is active upon P.nitroanisole, aniline, D-benzphetamine, delta(9)-tetrahydrocannabinol (THC) and strychnine. This Cavia porcellus (Guinea pig) protein is Cytochrome P450IIB.